A 207-amino-acid chain; its full sequence is Dephospho-CoA kinase (207 aa).

In terms of domain architecture, DPCK spans 10–207; it reads ILGLTGGIGS…FYLTLRGGQS (198 aa). An ATP-binding site is contributed by 18-23; it reads GSGKSA.

This sequence belongs to the CoaE family.

Its subcellular location is the cytoplasm. The catalysed reaction is 3'-dephospho-CoA + ATP = ADP + CoA + H(+). The protein operates within cofactor biosynthesis; coenzyme A biosynthesis; CoA from (R)-pantothenate: step 5/5. Functionally, catalyzes the phosphorylation of the 3'-hydroxyl group of dephosphocoenzyme A to form coenzyme A. The sequence is that of Dephospho-CoA kinase from Pseudomonas syringae pv. syringae (strain B728a).